Reading from the N-terminus, the 588-residue chain is Adenine deaminase (588 aa).

It belongs to the metallo-dependent hydrolases superfamily. Adenine deaminase family. In terms of assembly, homodimer. Mn(2+) serves as cofactor.

The enzyme catalyses adenine + H2O + H(+) = hypoxanthine + NH4(+). The protein is Adenine deaminase of Escherichia coli (strain SMS-3-5 / SECEC).